Here is a 236-residue protein sequence, read N- to C-terminus: (5-formylfuran-3-yl)methyl phosphate synthase (236 aa).

Catalysis depends on Lys27, which acts as the Schiff-base intermediate with substrate. The active-site Proton acceptor is Lys85.

This sequence belongs to the MfnB family.

It catalyses the reaction 2 D-glyceraldehyde 3-phosphate = 4-(hydroxymethyl)-2-furancarboxaldehyde phosphate + phosphate + 2 H2O. It functions in the pathway cofactor biosynthesis; methanofuran biosynthesis. Its function is as follows. Catalyzes the formation of 4-(hydroxymethyl)-2-furancarboxaldehyde phosphate (4-HFC-P) from two molecules of glyceraldehyde-3-P (GA-3-P). The polypeptide is (5-formylfuran-3-yl)methyl phosphate synthase (Methanococcus maripaludis (strain C7 / ATCC BAA-1331)).